Reading from the N-terminus, the 359-residue chain is Alanine racemase, biosynthetic (359 aa).

The active-site Proton acceptor; specific for D-alanine is the lysine 34. At lysine 34 the chain carries N6-(pyridoxal phosphate)lysine. Arginine 129 serves as a coordination point for substrate. Residue tyrosine 255 is the Proton acceptor; specific for L-alanine of the active site. Position 303 (methionine 303) interacts with substrate.

The protein belongs to the alanine racemase family. In terms of assembly, monomer but homodimer in the presence of the substrate. The cofactor is pyridoxal 5'-phosphate.

It catalyses the reaction L-alanine = D-alanine. The protein operates within amino-acid biosynthesis; D-alanine biosynthesis; D-alanine from L-alanine: step 1/1. Its pathway is cell wall biogenesis; peptidoglycan biosynthesis. Its function is as follows. Catalyzes the interconversion of L-alanine and D-alanine. The sequence is that of Alanine racemase, biosynthetic (alr) from Shigella dysenteriae.